The primary structure comprises 168 residues: MTTAPSGLPGTPLPPARRRERPRWPLLVAGAAVLGLIGYMVLGNANSNLVYYVLPSEYQQDTAKFAGKTLRMGGLAKDVVYNRDTLALKFNMTDGQVAYPVQYQGAVPDMFRNDAVVVMEGQMQQGVFHGKSLLVKHSEEYKAADSKGEGQYSQDDLKKILNDQSTKP.

The Cytoplasmic portion of the chain corresponds to 1-23 (MTTAPSGLPGTPLPPARRRERPR). Residues 24–44 (WPLLVAGAAVLGLIGYMVLGN) form a helical; Signal-anchor for type II membrane protein membrane-spanning segment. Residues 45-168 (ANSNLVYYVL…KILNDQSTKP (124 aa)) are Extracellular-facing. Residues His-137 and Tyr-141 each coordinate heme. Residues 145–168 (DSKGEGQYSQDDLKKILNDQSTKP) are disordered.

This sequence belongs to the CcmE/CycJ family.

It is found in the cell membrane. Heme chaperone required for the biogenesis of c-type cytochromes. Transiently binds heme delivered by CcmC and transfers the heme to apo-cytochromes in a process facilitated by CcmF and CcmH. In Deinococcus radiodurans (strain ATCC 13939 / DSM 20539 / JCM 16871 / CCUG 27074 / LMG 4051 / NBRC 15346 / NCIMB 9279 / VKM B-1422 / R1), this protein is Cytochrome c-type biogenesis protein CcmE.